A 115-amino-acid chain; its full sequence is Protein translation factor SUI1 homolog (115 aa).

This sequence belongs to the SUI1 family. As to expression, expressed in all tissues examined.

Probably involved in translation. The sequence is that of Protein translation factor SUI1 homolog (GOS2) from Oryza sativa subsp. indica (Rice).